The chain runs to 259 residues: Thiazole synthase (259 aa).

The Schiff-base intermediate with DXP role is filled by lysine 95. Residues glycine 156, 182 to 183 (AG), and 204 to 205 (AS) each bind 1-deoxy-D-xylulose 5-phosphate.

Belongs to the ThiG family. In terms of assembly, homotetramer. Forms heterodimers with either ThiH or ThiS.

The protein resides in the cytoplasm. It catalyses the reaction [ThiS sulfur-carrier protein]-C-terminal-Gly-aminoethanethioate + 2-iminoacetate + 1-deoxy-D-xylulose 5-phosphate = [ThiS sulfur-carrier protein]-C-terminal Gly-Gly + 2-[(2R,5Z)-2-carboxy-4-methylthiazol-5(2H)-ylidene]ethyl phosphate + 2 H2O + H(+). The protein operates within cofactor biosynthesis; thiamine diphosphate biosynthesis. Catalyzes the rearrangement of 1-deoxy-D-xylulose 5-phosphate (DXP) to produce the thiazole phosphate moiety of thiamine. Sulfur is provided by the thiocarboxylate moiety of the carrier protein ThiS. In vitro, sulfur can be provided by H(2)S. The protein is Thiazole synthase of Corynebacterium efficiens (strain DSM 44549 / YS-314 / AJ 12310 / JCM 11189 / NBRC 100395).